A 230-amino-acid chain; its full sequence is Somatolactin (230 aa).

Residues 1-25 (MHTKVLQQGLWALLLWPHLFTVSVP) form the signal peptide. 3 disulfides stabilise this stretch: Cys-28-Cys-38, Cys-88-Cys-204, and Cys-221-Cys-229. N-linked (GlcNAc...) asparagine glycosylation is present at Asn-144.

Belongs to the somatotropin/prolactin family.

It localises to the secreted. Its function is as follows. Selectively regulates proliferation and morphogenesis of neural-crest derived pigment cells. This chain is Somatolactin, found in Oryzias latipes (Japanese rice fish).